The sequence spans 258 residues: MVKIIFVFFIFLSSFSYANDDKLYRADSRPPDEIKQSGGLMPRGQSEYFDRGTQMNINLYDHARGTQTGFVRHDDGYVSTSISLRSAHLVGQTILSGHSTYYIYVIATAPNMFNVNDVLGAYSPHPDEQEVSALGGIPYSQIYGWYRVHFGVLDEQLHRNRGYRDRYYSNLDIAPAADGYGLAGFPPEHRAWREEPWIHHAPPGCGNAPRSSMSNTCDEKTQSLGVKFLDEYQSKVKRQIFSGYQSDIDTHNRIKDEL.

Residues methionine 1–alanine 18 form the signal peptide. NAD(+) is bound by residues arginine 25 to serine 28 and methionine 41 to arginine 43. The active site involves glutamate 130. A disulfide bridge links cysteine 205 with cysteine 217.

It belongs to the enterotoxin A family. In terms of assembly, the holotoxin (choleragen) consists of a pentameric ring of B subunits whose central pore is occupied by the A subunit. The A subunit contains two chains, A1 and A2, linked by a disulfide bridge. Interaction with the host protein ARF6 causes a conformation change so that the enterotoxin subunit A1 can bind NAD and catalyze the ADP-ribosylation of the host Gs alpha.

The A1 chain catalyzes the ADP-ribosylation of Gs alpha, a GTP-binding regulatory protein, to activate the adenylate cyclase. This leads to an overproduction of cAMP and eventually to a hypersecretion of chloride and bicarbonate followed by water, resulting in the characteristic cholera stool. The A2 chain tethers A1 to the pentameric ring. The polypeptide is Cholera enterotoxin subunit A (ctxA) (Vibrio cholerae serotype O1 (strain ATCC 39315 / El Tor Inaba N16961)).